We begin with the raw amino-acid sequence, 1561 residues long: Rho GTPase-activating protein 190 (1561 aa).

4 FF domains span residues 252 to 320 (YQES…HMKK), 365 to 419 (YLQN…YLNS), 426 to 480 (KIGW…HQDD), and 482 to 547 (IEKS…HLRF). One can recognise a pG1 pseudoGTPase domain in the interval 592-765 (SGSDRTLNLL…EPYPSNHTDL (174 aa)). A pG2 pseudoGTPase domain is found at 766–926 (RILCCIFCGD…LKTAWDNKYE (161 aa)). 5 positions are modified to phosphoserine: serine 973, serine 975, serine 985, serine 988, and serine 996. The tract at residues 1054-1074 (KIRPKGPSQTLKVGEAPSRNC) is disordered. The 204-residue stretch at 1349 to 1552 (AQFGKLMITS…TMIDQFPYLF (204 aa)) folds into the Rho-GAP domain.

Its activity is regulated as follows. Negatively regulated by integrin, bsk and Src/Src64B. Functionally, GTPase-activating protein (GAP) for RhoA/Rho1 that plays an essential role in the stability of dorsal branches of mushroom body (MB) neurons. The MB neurons are the center for olfactory learning and memory. Acts by converting RhoA/Rho1 to an inactive GDP-bound state, leading to repress the RhoA/Rho1-Drok-MRLC signaling pathway thereby maintaining axon branch stability. The polypeptide is Rho GTPase-activating protein 190 (RhoGAPp190) (Drosophila melanogaster (Fruit fly)).